Here is a 122-residue protein sequence, read N- to C-terminus: Small ribosomal subunit protein uS13 (122 aa).

The segment at Pro-97–Lys-122 is disordered.

Belongs to the universal ribosomal protein uS13 family. As to quaternary structure, part of the 30S ribosomal subunit. Forms a loose heterodimer with protein S19. Forms two bridges to the 50S subunit in the 70S ribosome.

Located at the top of the head of the 30S subunit, it contacts several helices of the 16S rRNA. In the 70S ribosome it contacts the 23S rRNA (bridge B1a) and protein L5 of the 50S subunit (bridge B1b), connecting the 2 subunits; these bridges are implicated in subunit movement. Contacts the tRNAs in the A and P-sites. The chain is Small ribosomal subunit protein uS13 from Brucella anthropi (strain ATCC 49188 / DSM 6882 / CCUG 24695 / JCM 21032 / LMG 3331 / NBRC 15819 / NCTC 12168 / Alc 37) (Ochrobactrum anthropi).